Consider the following 45-residue polypeptide: uncharacterized protein (45 aa).

This is an uncharacterized protein from Escherichia coli (Bacteriophage T4).